Here is a 220-residue protein sequence, read N- to C-terminus: Small ribosomal subunit protein uS3 (220 aa).

Residues 39–107 (IREHVEGRLK…RVHINISEIK (69 aa)) form the KH type-2 domain.

This sequence belongs to the universal ribosomal protein uS3 family. Part of the 30S ribosomal subunit. Forms a tight complex with proteins S10 and S14.

In terms of biological role, binds the lower part of the 30S subunit head. Binds mRNA in the 70S ribosome, positioning it for translation. The polypeptide is Small ribosomal subunit protein uS3 (Shouchella clausii (strain KSM-K16) (Alkalihalobacillus clausii)).